The sequence spans 132 residues: Insulin-like 3 (132 aa).

The N-terminal stretch at M1–L21 is a signal peptide. Q27 is subject to Pyrrolidone carboxylic acid. 3 disulfides stabilise this stretch: C34–C117, C46–C130, and C116–C121. Positions L67–H104 are cleaved as a propeptide — c peptide like.

The protein belongs to the insulin family. Heterodimer of a B chain and an A chain linked by two disulfide bonds. 20% of B chains include an extra N-terminal pentapeptide. Expressed exclusively in Leydig cells of the testis.

It is found in the secreted. Its function is as follows. Seems to play a role in testicular function. May be a trophic hormone with a role in testicular descent in fetal life. Is a ligand for LGR8 receptor. The polypeptide is Insulin-like 3 (INSL3) (Bos taurus (Bovine)).